The sequence spans 414 residues: Serine hydroxymethyltransferase (414 aa).

Residues Leu116 and 120 to 122 (GHL) each bind (6S)-5,6,7,8-tetrahydrofolate. Lys224 is subject to N6-(pyridoxal phosphate)lysine. (6S)-5,6,7,8-tetrahydrofolate is bound at residue 348 to 350 (SPF).

This sequence belongs to the SHMT family. Homodimer. Pyridoxal 5'-phosphate serves as cofactor.

The protein resides in the cytoplasm. It carries out the reaction (6R)-5,10-methylene-5,6,7,8-tetrahydrofolate + glycine + H2O = (6S)-5,6,7,8-tetrahydrofolate + L-serine. It functions in the pathway one-carbon metabolism; tetrahydrofolate interconversion. Its pathway is amino-acid biosynthesis; glycine biosynthesis; glycine from L-serine: step 1/1. Its function is as follows. Catalyzes the reversible interconversion of serine and glycine with tetrahydrofolate (THF) serving as the one-carbon carrier. This reaction serves as the major source of one-carbon groups required for the biosynthesis of purines, thymidylate, methionine, and other important biomolecules. Also exhibits THF-independent aldolase activity toward beta-hydroxyamino acids, producing glycine and aldehydes, via a retro-aldol mechanism. The chain is Serine hydroxymethyltransferase from Campylobacter jejuni subsp. doylei (strain ATCC BAA-1458 / RM4099 / 269.97).